The primary structure comprises 450 residues: Sorting nexin-4 (450 aa).

Met1 bears the N-acetylmethionine mark. The segment at 1–46 (MEQAPPDPERQLQPAPLEPLGSPDAVLGAAVGKETEGAGEESSGVD) is disordered. Ser22 is modified (phosphoserine). In terms of domain architecture, PX spans 61-187 (SVSEAEKRTG…YLFLTQEGNW (127 aa)). The a 1,2-diacyl-sn-glycero-3-phospho-(1D-myo-inositol-3-phosphate) site is built by Arg106, Ser108, Lys132, and Arg154.

The protein belongs to the sorting nexin family. Heterodimer; heterodimerizes with SNX7 or SNX30. Interacts with WWC1/KIBRA. Identified in a complex with WWC1/KIBRA and dynein components DYNLL1 and DYNC1I2. Interacts with BIN1.

It localises to the early endosome. The protein localises to the early endosome membrane. Its function is as follows. Involved in the regulation of endocytosis and in several stages of intracellular trafficking. Plays a role in recycling endocytosed transferrin receptor and prevent its degradation. Involved in autophagosome assembly by regulating trafficking and recycling of phospholipid scramblase ATG9A. In Pongo abelii (Sumatran orangutan), this protein is Sorting nexin-4.